We begin with the raw amino-acid sequence, 211 residues long: Uracil phosphoribosyltransferase (211 aa).

5-phospho-alpha-D-ribose 1-diphosphate contacts are provided by residues arginine 78, arginine 103, and aspartate 130 to threonine 138. Residues isoleucine 195 and glycine 200 to alanine 202 each bind uracil. Aspartate 201 serves as a coordination point for 5-phospho-alpha-D-ribose 1-diphosphate.

It belongs to the UPRTase family. Mg(2+) serves as cofactor.

It carries out the reaction UMP + diphosphate = 5-phospho-alpha-D-ribose 1-diphosphate + uracil. The protein operates within pyrimidine metabolism; UMP biosynthesis via salvage pathway; UMP from uracil: step 1/1. Its activity is regulated as follows. Allosterically activated by GTP. Its function is as follows. Catalyzes the conversion of uracil and 5-phospho-alpha-D-ribose 1-diphosphate (PRPP) to UMP and diphosphate. This is Uracil phosphoribosyltransferase from Paenarthrobacter aurescens (strain TC1).